Here is a 93-residue protein sequence, read N- to C-terminus: Small ribosomal subunit protein uS15 (93 aa).

Belongs to the universal ribosomal protein uS15 family. As to quaternary structure, part of the 30S ribosomal subunit. Forms a bridge to the 50S subunit in the 70S ribosome, contacting the 23S rRNA.

Its function is as follows. One of the primary rRNA binding proteins, it binds directly to 16S rRNA where it helps nucleate assembly of the platform of the 30S subunit by binding and bridging several RNA helices of the 16S rRNA. Forms an intersubunit bridge (bridge B4) with the 23S rRNA of the 50S subunit in the ribosome. This chain is Small ribosomal subunit protein uS15, found in Anaplasma phagocytophilum (strain HZ).